We begin with the raw amino-acid sequence, 394 residues long: tRNA-specific 2-thiouridylase MnmA (394 aa).

ATP is bound by residues 13–20 and Met-39; that span reads GLSGGVDS. An interaction with target base in tRNA region spans residues 99 to 101; sequence NPD. Catalysis depends on Cys-104, which acts as the Nucleophile. An intrachain disulfide couples Cys-104 to Cys-202. Position 128 (Gly-128) interacts with ATP. The tract at residues 152-154 is interaction with tRNA; that stretch reads KDQ. Catalysis depends on Cys-202, which acts as the Cysteine persulfide intermediate. Residues 329–330 are interaction with tRNA; that stretch reads RY.

The protein belongs to the MnmA/TRMU family.

It localises to the cytoplasm. It carries out the reaction S-sulfanyl-L-cysteinyl-[protein] + uridine(34) in tRNA + AH2 + ATP = 2-thiouridine(34) in tRNA + L-cysteinyl-[protein] + A + AMP + diphosphate + H(+). Catalyzes the 2-thiolation of uridine at the wobble position (U34) of tRNA, leading to the formation of s(2)U34. This Polaromonas naphthalenivorans (strain CJ2) protein is tRNA-specific 2-thiouridylase MnmA.